The sequence spans 142 residues: Transcriptional regulator MraZ (142 aa).

SpoVT-AbrB domains are found at residues 5–51 and 77–120; these read ASAL…PRPE and AMDV…DSQT.

Belongs to the MraZ family. In terms of assembly, forms oligomers.

It localises to the cytoplasm. The protein resides in the nucleoid. The polypeptide is Transcriptional regulator MraZ (Burkholderia multivorans (strain ATCC 17616 / 249)).